Here is a 224-residue protein sequence, read N- to C-terminus: Ribonuclease T (224 aa).

The region spanning 20-194 is the Exonuclease domain; that stretch reads VVIDVETAGF…YDTERTAELF (175 aa). D23, E25, H181, and D186 together coordinate Mg(2+). H181 acts as the Proton donor/acceptor in catalysis.

The protein belongs to the RNase T family. Homodimer. It depends on Mg(2+) as a cofactor.

Trims short 3' overhangs of a variety of RNA species, leaving a one or two nucleotide 3' overhang. Responsible for the end-turnover of tRNA: specifically removes the terminal AMP residue from uncharged tRNA (tRNA-C-C-A). Also appears to be involved in tRNA biosynthesis. The sequence is that of Ribonuclease T from Enterobacter sp. (strain 638).